Here is a 226-residue protein sequence, read N- to C-terminus: Transcriptional regulatory protein CitT (226 aa).

One can recognise a Response regulatory domain in the interval 3–119 (HIAIAEDDFR…KFRQVLLQYK (117 aa)). The residue at position 54 (Asp54) is a 4-aspartylphosphate. The segment at residues 178–197 (AEELGEKMGASRTTARRYAE) is a DNA-binding region (H-T-H motif).

Phosphorylated by CitS.

The protein resides in the cytoplasm. Member of the two-component regulatory system CitT/CitS. Regulates the expression of the citM-yflN operon. Phosphorylated CitT binds to the citM promoter to activate the transcription of the citM-yflN operon. The polypeptide is Transcriptional regulatory protein CitT (citT) (Bacillus subtilis (strain 168)).